A 357-amino-acid chain; its full sequence is UDP-N-acetylglucosamine--N-acetylmuramyl-(pentapeptide) pyrophosphoryl-undecaprenol N-acetylglucosamine transferase (357 aa).

Residues 15-17, N124, R165, S191, and Q285 each bind UDP-N-acetyl-alpha-D-glucosamine; that span reads TGG.

This sequence belongs to the glycosyltransferase 28 family. MurG subfamily.

It localises to the cell inner membrane. It carries out the reaction di-trans,octa-cis-undecaprenyl diphospho-N-acetyl-alpha-D-muramoyl-L-alanyl-D-glutamyl-meso-2,6-diaminopimeloyl-D-alanyl-D-alanine + UDP-N-acetyl-alpha-D-glucosamine = di-trans,octa-cis-undecaprenyl diphospho-[N-acetyl-alpha-D-glucosaminyl-(1-&gt;4)]-N-acetyl-alpha-D-muramoyl-L-alanyl-D-glutamyl-meso-2,6-diaminopimeloyl-D-alanyl-D-alanine + UDP + H(+). It functions in the pathway cell wall biogenesis; peptidoglycan biosynthesis. Functionally, cell wall formation. Catalyzes the transfer of a GlcNAc subunit on undecaprenyl-pyrophosphoryl-MurNAc-pentapeptide (lipid intermediate I) to form undecaprenyl-pyrophosphoryl-MurNAc-(pentapeptide)GlcNAc (lipid intermediate II). This is UDP-N-acetylglucosamine--N-acetylmuramyl-(pentapeptide) pyrophosphoryl-undecaprenol N-acetylglucosamine transferase from Microcystis aeruginosa (strain NIES-843 / IAM M-2473).